The chain runs to 204 residues: MPSFLRGILRPKERHHENKNHSQMSSDSLTSSYPTSPPKLEKTEAGSIISSTTQKKTSHHANLTITTKTEQSQRRPKIIDQVRRVESLGEQVSQKQRHMLESLINKVYTGPLGEELVQTLYLRIWAMKETPESTKILQMREDIRDQYLRMKTERWLRTLIRGKKTKLRDFQKRYEEVHPYLMMERVEQIIMEEAWKLAAHIVQE.

The tract at residues Met-1 to Arg-75 is disordered. The span at Arg-10–Asn-20 shows a compositional bias: basic and acidic residues. A compositionally biased stretch (low complexity) spans Ser-25–Pro-34. The segment covering His-60–Glu-70 has biased composition (polar residues).

The protein belongs to the respirovirus protein C family.

This is Protein C (P/V/C) from Homo sapiens (Human).